Reading from the N-terminus, the 368-residue chain is tRNA 2-selenouridine synthase (368 aa).

A Rhodanese domain is found at 15 to 138 (MLSGHPMIDV…MRQYLIEVID (124 aa)). The active-site S-selanylcysteine intermediate is the C98.

This sequence belongs to the SelU family. As to quaternary structure, monomer.

The enzyme catalyses 5-methylaminomethyl-2-thiouridine(34) in tRNA + selenophosphate + (2E)-geranyl diphosphate + H2O + H(+) = 5-methylaminomethyl-2-selenouridine(34) in tRNA + (2E)-thiogeraniol + phosphate + diphosphate. It catalyses the reaction 5-methylaminomethyl-2-thiouridine(34) in tRNA + (2E)-geranyl diphosphate = 5-methylaminomethyl-S-(2E)-geranyl-thiouridine(34) in tRNA + diphosphate. The catalysed reaction is 5-methylaminomethyl-S-(2E)-geranyl-thiouridine(34) in tRNA + selenophosphate + H(+) = 5-methylaminomethyl-2-(Se-phospho)selenouridine(34) in tRNA + (2E)-thiogeraniol. It carries out the reaction 5-methylaminomethyl-2-(Se-phospho)selenouridine(34) in tRNA + H2O = 5-methylaminomethyl-2-selenouridine(34) in tRNA + phosphate. In terms of biological role, involved in the post-transcriptional modification of the uridine at the wobble position (U34) of tRNA(Lys), tRNA(Glu) and tRNA(Gln). Catalyzes the conversion of 2-thiouridine (S2U-RNA) to 2-selenouridine (Se2U-RNA). Acts in a two-step process involving geranylation of 2-thiouridine (S2U) to S-geranyl-2-thiouridine (geS2U) and subsequent selenation of the latter derivative to 2-selenouridine (Se2U) in the tRNA chain. This Shewanella woodyi (strain ATCC 51908 / MS32) protein is tRNA 2-selenouridine synthase.